Here is a 70-residue protein sequence, read N- to C-terminus: UPF0270 protein VS_2853 (70 aa).

Belongs to the UPF0270 family.

This is UPF0270 protein VS_2853 from Vibrio atlanticus (strain LGP32) (Vibrio splendidus (strain Mel32)).